A 337-amino-acid polypeptide reads, in one-letter code: N-acetyl-gamma-glutamyl-phosphate reductase (337 aa).

Cysteine 149 is a catalytic residue.

The protein belongs to the NAGSA dehydrogenase family. Type 1 subfamily.

It localises to the cytoplasm. It carries out the reaction N-acetyl-L-glutamate 5-semialdehyde + phosphate + NADP(+) = N-acetyl-L-glutamyl 5-phosphate + NADPH + H(+). Its pathway is amino-acid biosynthesis; L-arginine biosynthesis; N(2)-acetyl-L-ornithine from L-glutamate: step 3/4. Catalyzes the NADPH-dependent reduction of N-acetyl-5-glutamyl phosphate to yield N-acetyl-L-glutamate 5-semialdehyde. In Wolinella succinogenes (strain ATCC 29543 / DSM 1740 / CCUG 13145 / JCM 31913 / LMG 7466 / NCTC 11488 / FDC 602W) (Vibrio succinogenes), this protein is N-acetyl-gamma-glutamyl-phosphate reductase.